The chain runs to 266 residues: Glutamate racemase (266 aa).

Substrate contacts are provided by residues Asp9–Ser10 and Tyr41–Gly42. The Proton donor/acceptor role is filled by Cys72. Asn73–Thr74 serves as a coordination point for substrate. Residue Cys183 is the Proton donor/acceptor of the active site. Thr184–His185 is a substrate binding site.

This sequence belongs to the aspartate/glutamate racemases family.

The catalysed reaction is L-glutamate = D-glutamate. Its pathway is cell wall biogenesis; peptidoglycan biosynthesis. In terms of biological role, provides the (R)-glutamate required for cell wall biosynthesis. The chain is Glutamate racemase from Listeria monocytogenes serotype 4b (strain CLIP80459).